The sequence spans 88 residues: Alpha-latrotoxin-associated low molecular weight protein (88 aa).

Positions 1 to 18 are cleaved as a signal peptide; the sequence is MSKLFFVVFLCLIISVFA.

It belongs to the arthropod CHH/MIH/GIH/VIH hormone family. In terms of tissue distribution, expressed by the venom gland.

The protein resides in the secreted. May increase the toxicity of alpha-latrotoxin and/or other venom components. Is non-toxic to mice and to the cockroach Periplaneta americana. This chain is Alpha-latrotoxin-associated low molecular weight protein, found in Latrodectus tredecimguttatus (Mediterranean black widow spider).